Reading from the N-terminus, the 1644-residue chain is Peroxisome proliferator-activated receptor gamma coactivator-related protein 1 (1644 aa).

Disordered regions lie at residues 1–61 (MAAR…DSSF), 170–249 (PERD…EVAG), 429–616 (LTPK…TSPV), 646–761 (AADP…PETP), 773–884 (SAPA…QPPG), 978–1074 (STVS…EGVV), and 1322–1507 (AAPP…NDHY). The span at 12–22 (APPPTGGPGPD) shows a compositional bias: pro residues. Residues 213–222 (SSPKLPSWRP) are compositionally biased toward low complexity. Ser232 carries the post-translational modification Phosphoserine. The tract at residues 425-460 (IMESLTPKEPQSLPASASQGSQKVPRKGRKKKNKEQ) is necessary for interaction with CREB1 and NRF1 and for transcriptional coactivation. A compositionally biased stretch (polar residues) spans 437–446 (LPASASQGSQ). Positions 448–457 (VPRKGRKKKN) are enriched in basic residues. A compositionally biased stretch (polar residues) spans 475-496 (SSRGQSTVSAEVNSQAGSSQKQ). Low complexity predominate over residues 515–524 (RAWARAWAAA). Residue Ser541 is modified to Phosphoserine. Polar residues predominate over residues 556–572 (ETSQANPTLSLNDSAQA). Over residues 691–702 (DHPKVVSPEGKD) the composition is skewed to basic and acidic residues. Positions 811–821 (MVSTHSEQVSS) are enriched in polar residues. Pro residues-rich tracts occupy residues 828-864 (VRPPPPPLPSVSPAGPIPSTVPAPLPPFPPSVPPLLP) and 874-884 (RLPPPPLQPPG). Phosphoserine occurs at positions 1059, 1393, and 1395. The necessary for interaction with CREB1 and NRF1 stretch occupies residues 1361 to 1432 (EASPCRSEMN…SSSSSVSSSS (72 aa)). Low complexity-rich tracts occupy residues 1409–1433 (SRSVSSGSSRTSEASSSSSVSSSSR) and 1453–1489 (SSCSSSGRSRRCSSSSSSSSSSSSCSSRSRSPSVSPC). Positions 1523–1599 (RVVFIGKIPG…QPFDLCFGGR (77 aa)) constitute an RRM domain.

Interacts with CREB1 and NRF1. In terms of tissue distribution, expressed in liver, heart, skeletal muscle, kidney and white and brown adipose tissues.

It localises to the nucleus. Acts as a coactivator during transcriptional activation of nuclear genes related to mitochondrial biogenesis and cell growth. Involved in the transcription coactivation of CREB and NRF1 target genes. In Mus musculus (Mouse), this protein is Peroxisome proliferator-activated receptor gamma coactivator-related protein 1 (Pprc1).